Consider the following 120-residue polypeptide: Large ribosomal subunit protein bL20 (120 aa).

This sequence belongs to the bacterial ribosomal protein bL20 family.

Functionally, binds directly to 23S ribosomal RNA and is necessary for the in vitro assembly process of the 50S ribosomal subunit. It is not involved in the protein synthesizing functions of that subunit. The polypeptide is Large ribosomal subunit protein bL20 (Pseudoalteromonas translucida (strain TAC 125)).